A 710-amino-acid chain; its full sequence is Bifunctional sesterterpene synthase (710 aa).

The tract at residues 1–327 is stellata-2,6,19-trien synthase; that stretch reads MEFKFSAVVD…RYYTDASFSE (327 aa). 2 residues coordinate Mg(2+): D92 and D96. Substrate-binding positions include D92, D96, 181–184, and 229–233; these read RVHD and SWDKE. Positions 92–96 match the DDXXD motif 1 motif; that stretch reads DDVTD. Positions 278-286 match the NSE motif motif; that stretch reads YLRVFEEVK. 318–319 lines the substrate pocket; the sequence is RY. The interval 328-709 is geranylgeranyl diphosphate synthase; sequence RQLEWMKNGI…LRLIFELLRN (382 aa). The disordered stretch occupies residues 365–404; that stretch reads HHAVTSNGTGTGSHDTLNGDGTAHENNSRDASIPGRTTNG. Residues 368 to 380 are compositionally biased toward polar residues; that stretch reads VTSNGTGTGSHDT. K430, R433, and H462 together coordinate isopentenyl diphosphate. 2 residues coordinate Mg(2+): D469 and D473. The short motif at 469 to 473 is the DDXXD motif 2 element; that stretch reads DDLED. Residue R478 coordinates dimethylallyl diphosphate. Residue R479 coordinates isopentenyl diphosphate. Dimethylallyl diphosphate contacts are provided by K556, T557, Q592, N599, K609, and K619.

It in the C-terminal section; belongs to the FPP/GGPP synthase family. This sequence in the N-terminal section; belongs to the terpene synthase family. Hexamer.

The catalysed reaction is 4 isopentenyl diphosphate + dimethylallyl diphosphate = (2E,6E,10E,14E)-geranylfarnesyl diphosphate + 4 diphosphate. It carries out the reaction (2E,6E,10E,14E)-geranylfarnesyl diphosphate = variecoladiene + diphosphate. It functions in the pathway secondary metabolite biosynthesis; terpenoid biosynthesis. Multifunctional sesterterpene synthase; part of the gene cluster that mediates the biosynthesis of the sesterterpene variecolin. The first step in the pathway is performed by the variecoladiene synthase vrcA that possesses both prenyl transferase and terpene cyclase activity, converting isopentenyl diphosphate and dimethylallyl diphosphate into geranylfarnesyl pyrophosphate (GFPP) and then converting GFPP into the tetracyclic variecoladiene. The cytochrome P450 monooxygenase vrcB then catalyzes multiple oxidations at C-5 and C-20 positions to yield variecolin. The protein is Bifunctional sesterterpene synthase of Aspergillus aculeatus (strain ATCC 16872 / CBS 172.66 / WB 5094).